A 206-amino-acid chain; its full sequence is Protein DEHYDRATION-INDUCED 19 (206 aa).

At Thr-105 the chain carries Phosphothreonine. A Phosphoserine modification is found at Ser-107. The interval 142 to 167 (SSFISPTRSQSSPAPRQTKNVSEDKQ) is disordered. Polar residues predominate over residues 143-161 (SFISPTRSQSSPAPRQTKN).

The protein belongs to the Di19 family. As to quaternary structure, interacts with ADO2/LKP2, CPK11 and CPK4. Weak interaction with CPK12 and no interactions with CPK1, CPK5 or CPK26. Post-translationally, phosphorylated within the NLS/NES region. In terms of tissue distribution, expressed in seedlings, roots, leaves, stems, flowers and siliques.

It localises to the nucleus. In Arabidopsis thaliana (Mouse-ear cress), this protein is Protein DEHYDRATION-INDUCED 19 (DI19-1).